Reading from the N-terminus, the 289-residue chain is Diaminopimelate epimerase (289 aa).

The substrate site is built by asparagine 13, glutamine 47, and asparagine 67. Residue cysteine 76 is the Proton donor of the active site. Substrate contacts are provided by residues 77–78, asparagine 167, asparagine 200, and 218–219; these read GN and ER. Catalysis depends on cysteine 227, which acts as the Proton acceptor. 228 to 229 is a substrate binding site; sequence GT.

Belongs to the diaminopimelate epimerase family. In terms of assembly, homodimer.

The protein resides in the cytoplasm. It carries out the reaction (2S,6S)-2,6-diaminopimelate = meso-2,6-diaminopimelate. The protein operates within amino-acid biosynthesis; L-lysine biosynthesis via DAP pathway; DL-2,6-diaminopimelate from LL-2,6-diaminopimelate: step 1/1. In terms of biological role, catalyzes the stereoinversion of LL-2,6-diaminopimelate (L,L-DAP) to meso-diaminopimelate (meso-DAP), a precursor of L-lysine and an essential component of the bacterial peptidoglycan. This is Diaminopimelate epimerase from Burkholderia ambifaria (strain ATCC BAA-244 / DSM 16087 / CCUG 44356 / LMG 19182 / AMMD) (Burkholderia cepacia (strain AMMD)).